The chain runs to 289 residues: MAGAKEIKTKIASVQSTQKITKAMEMVATSKMRKTQDRMAASRPYSETIRNVISHVSKASIGYKHPFLVEREVKKIGILVISTDRGMCGGLNVNLFKTILNQIKNWKEQNISTDLGLIGSKGISFFRSFGFNIKGQLSGLGDMPALEELIGVANTMFDAYRNGEIDAVYIAYNKFVNTMSQKPVVQQLVPLPESKDDHLNERQQTWDYLYEPEPKVLLDSLLVRYLESQIYQAVVDNLASEQAARMVAMKAATDNAGNLINDLRLVYNKARQASITNELNEIVAGAAAI.

This sequence belongs to the ATPase gamma chain family. As to quaternary structure, F-type ATPases have 2 components, CF(1) - the catalytic core - and CF(0) - the membrane proton channel. CF(1) has five subunits: alpha(3), beta(3), gamma(1), delta(1), epsilon(1). CF(0) has three main subunits: a, b and c.

The protein localises to the cell inner membrane. Functionally, produces ATP from ADP in the presence of a proton gradient across the membrane. The gamma chain is believed to be important in regulating ATPase activity and the flow of protons through the CF(0) complex. The sequence is that of ATP synthase gamma chain from Haemophilus influenzae (strain PittGG).